The primary structure comprises 892 residues: Histone deacetylase 4 (892 aa).

The interval 145-225 is disordered; the sequence is NGNLSNLSVP…MSNVNGHDNS (81 aa). Polar residues-rich tracts occupy residues 171 to 192 and 208 to 222; these read SAPT…ISQL and ESNS…VNGH. Positions 481-822 are histone deacetylase; the sequence is STGLGYDPLM…VQALIGESDD (342 aa). The active site involves H628.

The protein belongs to the histone deacetylase family. HD type 2 subfamily.

Its subcellular location is the nucleus. It carries out the reaction N(6)-acetyl-L-lysyl-[histone] + H2O = L-lysyl-[histone] + acetate. Its function is as follows. Responsible for the deacetylation of lysine residues on the N-terminal part of the core histones (H2A, H2B, H3 and H4). Histone deacetylation gives a tag for epigenetic repression and plays an important role in transcriptional regulation, cell cycle progression and developmental events. Histone deacetylases act via the formation of large multiprotein complexes. The protein is Histone deacetylase 4 (hda-4) of Caenorhabditis briggsae.